Consider the following 283-residue polypeptide: 1-deoxypentalenic acid 11-beta-hydroxylase (283 aa).

R117 contacts substrate. H135 and D137 together coordinate Fe cation. Residues 135–137 (HQD) and W151 each bind 2-oxoglutarate. Position 186 (R186) interacts with substrate. H224 is a binding site for Fe cation. Residues S226 and R238 each contribute to the 2-oxoglutarate site. Positions 251-283 (HRGFNALTPWPESAKDASKGIMSKITGTPTTAE) are disordered.

It belongs to the PhyH family. Fe cation serves as cofactor. Requires L-ascorbate as cofactor.

The enzyme catalyses 1-deoxypentalenate + 2-oxoglutarate + O2 = 1-deoxy-11beta-hydroxypentalenate + succinate + CO2. It functions in the pathway antibiotic biosynthesis; pentalenolactone biosynthesis. Functionally, catalyzes the conversion of 1-deoxypentalenic acid to 11-beta-hydroxy-1-deoxypentalenic acid in the biosynthesis of pentalenolactone antibiotic. This chain is 1-deoxypentalenic acid 11-beta-hydroxylase (pntH), found in Streptomyces arenae.